The chain runs to 107 residues: Prostate collagen triple helix protein (107 aa).

Residues 47-107 form a disordered region; that stretch reads PLIPRTPGSP…PTSPLFPFCP (61 aa). The span at 81-100 shows a compositional bias: low complexity; the sequence is VGPKGPMLPLGPSGPVGPTS.

Expressed in prostate and testis. Weakly or not expressed in other tissues. Overexpressed in prostate cancers.

Its subcellular location is the cytoplasm. Functionally, may be involved in growth and survival of prostate cancer cells through the TAF-Ibeta pathway. This chain is Prostate collagen triple helix protein (PCOTH), found in Homo sapiens (Human).